The following is a 90-amino-acid chain: Large ribosomal subunit protein bL31 (90 aa).

The interval 65–90 is disordered; that stretch reads YSKQEGSGSKSNKSKSTKSKKGKGKK. A compositionally biased stretch (basic residues) spans 76-90; the sequence is NKSKSTKSKKGKGKK.

It belongs to the bacterial ribosomal protein bL31 family. Type A subfamily. As to quaternary structure, part of the 50S ribosomal subunit.

In terms of biological role, binds the 23S rRNA. In Trichodesmium erythraeum (strain IMS101), this protein is Large ribosomal subunit protein bL31.